Here is a 189-residue protein sequence, read N- to C-terminus: Protein Rex (189 aa).

The segment covering 1–16 has biased composition (basic residues); sequence MPKTRRRPRRSQRKRP. Positions 1–27 are disordered; that stretch reads MPKTRRRPRRSQRKRPPTPWPTSQGLD. A Nuclear localization signal, and RNA-binding (RxRE) motif is present at residues 2–18; the sequence is PKTRRRPRRSQRKRPPT. The segment at 56 to 70 is homomultimerization; it reads RPAYIVTPYWPPVQS. Phosphoserine; by host is present on serine 70. Residues 82-93 carry the Nuclear export signal motif; that stretch reads LSAQLYSSLSLD. The interval 87-189 is disordered; it reads YSSLSLDSPP…PPSPGPSCPM (103 aa). Over residues 105 to 114 the composition is skewed to low complexity; sequence PLRSLPRQSL. Positions 123-131 are homomultimerization; the sequence is PSSRPCANT. Over residues 143-164 the composition is skewed to polar residues; the sequence is LGSTSQPCLFQTPDSGPKTCTP. Phosphothreonine; by host is present on threonine 174. Serine 177 carries the phosphoserine; by host modification. The segment covering 178-189 has biased composition (pro residues); it reads FPPPSPGPSCPM.

The protein belongs to the deltaretrovirus Rex protein family. In terms of assembly, homomultimer. Multimeric assembly is essential for activity and involves XPO1. Binds to human XPO1 and KPNB1. Interacts (via N-terminal nuclear localization signal) with human NPM1. In terms of processing, phosphorylated.

It localises to the host nucleus. Its subcellular location is the host nucleolus. The protein localises to the host cytoplasm. Its function is as follows. Rex escorts unspliced gag-pro-pol and singly spliced env mRNAs out of the nucleus of infected cells. These mRNAs carry a recognition sequence called Rex responsive element (RxRE or XRE) located at the 3' region of the long terminal repeat (LTR). This function is essential since most HTLV proteins are translated from unspliced or partially spliced pre-mRNAs that cannot exit the nucleus by the pathway used by fully processed cellular mRNAs. Rex itself is translated from a fully spliced mRNA that probably readily exits the nucleus. Rex's nuclear localization signal (NLS) binds directly to KPNB1/importin beta-1 without previous binding to KPNA1/importin alpha-1. KPNB1 binds to the GDP bound form of RAN (Ran-GDP) and targets Rex to the nucleus. In the nucleus, the conversion from Ran-GDP to Ran-GTP dissociates Rex from KPNB1 and allows Rex's binding to the RRE in viral pre-mRNAs. Rex multimerizes on the RRE via cooperative assembly. This multimerization is critical for its full biological activity, since it may shield the viral RNA from being spliced or down-regulated, and probably exposes Rex's nuclear export signal (NES) to the surface. Rex can then form a complex with XPO1/CRM1, RANBP3 and Ran-GTP, leading to nuclear export of the complex. Conversion from Ran-GTP to Ran-GDP mediates dissociation of the Rex/RRE/XPO1/RANBP3/RAN complex, so that Rex can return to the nucleus for a subsequent round of export. The protein is Protein Rex of Human T-cell leukemia virus 1 (isolate Caribbea HS-35 subtype A) (HTLV-1).